The primary structure comprises 149 residues: Deoxyuridine 5'-triphosphate nucleotidohydrolase (149 aa).

Substrate is bound by residues Arg-68–Gly-70, Asn-81, Thr-85–Asp-87, and Lys-95.

This sequence belongs to the dUTPase family. The cofactor is Mg(2+).

It catalyses the reaction dUTP + H2O = dUMP + diphosphate + H(+). It functions in the pathway pyrimidine metabolism; dUMP biosynthesis; dUMP from dCTP (dUTP route): step 2/2. Functionally, this enzyme is involved in nucleotide metabolism: it produces dUMP, the immediate precursor of thymidine nucleotides and it decreases the intracellular concentration of dUTP so that uracil cannot be incorporated into DNA. The chain is Deoxyuridine 5'-triphosphate nucleotidohydrolase from Wolinella succinogenes (strain ATCC 29543 / DSM 1740 / CCUG 13145 / JCM 31913 / LMG 7466 / NCTC 11488 / FDC 602W) (Vibrio succinogenes).